The following is an 88-amino-acid chain: MALLSFLFNTKPKTANAAKERLQIIIARERNGRTGPDFLPALHKELIAVISKYVKVNPDDIKISLNSQGNLEVLDVNVVLPEDELVKP.

This sequence belongs to the MinE family.

Prevents the cell division inhibition by proteins MinC and MinD at internal division sites while permitting inhibition at polar sites. This ensures cell division at the proper site by restricting the formation of a division septum at the midpoint of the long axis of the cell. This is Cell division topological specificity factor from Herminiimonas arsenicoxydans.